A 141-amino-acid polypeptide reads, in one-letter code: Large ribosomal subunit protein uL16 (141 aa).

The protein belongs to the universal ribosomal protein uL16 family. Part of the 50S ribosomal subunit.

Binds 23S rRNA and is also seen to make contacts with the A and possibly P site tRNAs. The sequence is that of Large ribosomal subunit protein uL16 from Campylobacter lari (strain RM2100 / D67 / ATCC BAA-1060).